Here is a 446-residue protein sequence, read N- to C-terminus: Glycogen synthase (446 aa).

Arg-15 serves as a coordination point for ADP-alpha-D-glucose.

This sequence belongs to the glycosyltransferase 1 family. Bacterial/plant glycogen synthase subfamily.

The catalysed reaction is [(1-&gt;4)-alpha-D-glucosyl](n) + ADP-alpha-D-glucose = [(1-&gt;4)-alpha-D-glucosyl](n+1) + ADP + H(+). It functions in the pathway glycan biosynthesis; glycogen biosynthesis. In terms of biological role, synthesizes alpha-1,4-glucan chains using ADP-glucose. The polypeptide is Glycogen synthase (Deinococcus deserti (strain DSM 17065 / CIP 109153 / LMG 22923 / VCD115)).